The following is a 353-amino-acid chain: Casein kinase II subunit alpha (353 aa).

Residues 39–324 (YQLVRKLGRG…AREAMDHPYF (286 aa)) form the Protein kinase domain. Residues 45-53 (LGRGKYSEV) and Lys68 contribute to the ATP site. Asp156 (proton acceptor) is an active-site residue. The disordered stretch occupies residues 334-353 (MVSSNSPTPNALQGPISTTE).

Belongs to the protein kinase superfamily. Ser/Thr protein kinase family. CK2 subfamily. In terms of assembly, tetramer of two alpha and two beta chains.

The catalysed reaction is L-seryl-[protein] + ATP = O-phospho-L-seryl-[protein] + ADP + H(+). It carries out the reaction L-threonyl-[protein] + ATP = O-phospho-L-threonyl-[protein] + ADP + H(+). Casein kinases are operationally defined by their preferential utilization of acidic proteins such as caseins as substrates. The alpha chain contains the catalytic site. May participate in Wnt signaling. This chain is Casein kinase II subunit alpha, found in Spodoptera frugiperda (Fall armyworm).